A 249-amino-acid polypeptide reads, in one-letter code: Proteasome subunit alpha (249 aa).

This sequence belongs to the peptidase T1A family. As to quaternary structure, the 20S proteasome core is composed of 14 alpha and 14 beta subunits that assemble into four stacked heptameric rings, resulting in a barrel-shaped structure. The two inner rings, each composed of seven catalytic beta subunits, are sandwiched by two outer rings, each composed of seven alpha subunits. The catalytic chamber with the active sites is on the inside of the barrel. Has a gated structure, the ends of the cylinder being occluded by the N-termini of the alpha-subunits. Is capped at one or both ends by the proteasome regulatory ATPase, PAN.

It is found in the cytoplasm. Its activity is regulated as follows. The formation of the proteasomal ATPase PAN-20S proteasome complex, via the docking of the C-termini of PAN into the intersubunit pockets in the alpha-rings, triggers opening of the gate for substrate entry. Interconversion between the open-gate and close-gate conformations leads to a dynamic regulation of the 20S proteasome proteolysis activity. Functionally, component of the proteasome core, a large protease complex with broad specificity involved in protein degradation. The sequence is that of Proteasome subunit alpha from Methanosarcina mazei (strain ATCC BAA-159 / DSM 3647 / Goe1 / Go1 / JCM 11833 / OCM 88) (Methanosarcina frisia).